The primary structure comprises 61 residues: Putative defensin-like protein 72 (61 aa).

4 cysteine pairs are disulfide-bonded: cysteine 21–cysteine 59, cysteine 25–cysteine 48, cysteine 34–cysteine 57, and cysteine 38–cysteine 58.

This sequence belongs to the DEFL family.

This chain is Putative defensin-like protein 72, found in Arabidopsis thaliana (Mouse-ear cress).